Consider the following 118-residue polypeptide: Large ribosomal subunit protein uL18 (118 aa).

This sequence belongs to the universal ribosomal protein uL18 family. As to quaternary structure, part of the 50S ribosomal subunit; part of the 5S rRNA/L5/L18/L25 subcomplex. Contacts the 5S and 23S rRNAs.

Functionally, this is one of the proteins that bind and probably mediate the attachment of the 5S RNA into the large ribosomal subunit, where it forms part of the central protuberance. The sequence is that of Large ribosomal subunit protein uL18 from Rickettsia prowazekii (strain Madrid E).